A 503-amino-acid polypeptide reads, in one-letter code: Transcriptional regulator LovE (503 aa).

A DNA-binding region (zn(2)-C6 fungal-type) is located at residues 35–67 (CDRCHAQKIKCTGNKEVTGRAPCQRCQQAGLRC). 2 disordered regions span residues 89 to 124 (ADPD…RQFL) and 331 to 358 (SHMS…HSSV). Low complexity predominate over residues 339–357 (SRSQSPSRDDTSSSSGHSS).

It localises to the nucleus. In terms of biological role, transcription factor that regulates the expression of the he gene cluster that mediates the biosynthesis of lovastatin (also known as mevinolin, mevacor or monacolin K), a hypolipidemic inhibitor of (3S)-hydroxymethylglutaryl-coenzyme A (HMG-CoA) reductase (HMGR). The protein is Transcriptional regulator LovE of Aspergillus terreus.